The following is a 661-amino-acid chain: UvrABC system protein B (661 aa).

The region spanning 25–182 (AGLNSKKRSQ…NDLINLQYKR (158 aa)) is the Helicase ATP-binding domain. 38 to 45 (GITGSGKT) is an ATP binding site. The Beta-hairpin signature appears at 91–114 (YYDYYQPEAYIARTDTFIEKDSSI). In terms of domain architecture, Helicase C-terminal spans 430-592 (QVEDLISEIQ…IIPKTINRAI (163 aa)). One can recognise a UVR domain in the interval 621–656 (KANINKLNKEMLKAASNLEFEQAAKLRDQLKTLEAA).

It belongs to the UvrB family. In terms of assembly, forms a heterotetramer with UvrA during the search for lesions. Interacts with UvrC in an incision complex.

Its subcellular location is the cytoplasm. Functionally, the UvrABC repair system catalyzes the recognition and processing of DNA lesions. A damage recognition complex composed of 2 UvrA and 2 UvrB subunits scans DNA for abnormalities. Upon binding of the UvrA(2)B(2) complex to a putative damaged site, the DNA wraps around one UvrB monomer. DNA wrap is dependent on ATP binding by UvrB and probably causes local melting of the DNA helix, facilitating insertion of UvrB beta-hairpin between the DNA strands. Then UvrB probes one DNA strand for the presence of a lesion. If a lesion is found the UvrA subunits dissociate and the UvrB-DNA preincision complex is formed. This complex is subsequently bound by UvrC and the second UvrB is released. If no lesion is found, the DNA wraps around the other UvrB subunit that will check the other stand for damage. The chain is UvrABC system protein B from Rickettsia akari (strain Hartford).